The primary structure comprises 390 residues: Putative 8-amino-7-oxononanoate synthase (390 aa).

Residue Arg20 coordinates substrate. Gly107 to Tyr108 contacts pyridoxal 5'-phosphate. His132 is a substrate binding site. Pyridoxal 5'-phosphate is bound by residues Ser181, Asp206–His209, and Thr237–Lys240. N6-(pyridoxal phosphate)lysine is present on Lys240. A substrate-binding site is contributed by Thr356.

Belongs to the class-II pyridoxal-phosphate-dependent aminotransferase family. BioF subfamily. Homodimer. Requires pyridoxal 5'-phosphate as cofactor.

The catalysed reaction is 6-carboxyhexanoyl-[ACP] + L-alanine + H(+) = (8S)-8-amino-7-oxononanoate + holo-[ACP] + CO2. It participates in cofactor biosynthesis; biotin biosynthesis. In terms of biological role, catalyzes the decarboxylative condensation of pimeloyl-[acyl-carrier protein] and L-alanine to produce 8-amino-7-oxononanoate (AON), [acyl-carrier protein], and carbon dioxide. This chain is Putative 8-amino-7-oxononanoate synthase (bioF), found in Syntrophotalea carbinolica (strain DSM 2380 / NBRC 103641 / GraBd1) (Pelobacter carbinolicus).